The following is a 767-amino-acid chain: Protein hunchback (767 aa).

3 disordered regions span residues 30–51 (EPGH…PIPS), 105–127 (QQQY…HLMG), and 174–212 (EKLQ…SNSS). Polar residues predominate over residues 39-51 (SVASSPRQSPIPS). Residues 105 to 117 (QQQYQQHFQAAQQ) are compositionally biased toward low complexity. The span at 200–212 (EPEKEHDQMSNSS) shows a compositional bias: basic and acidic residues. 4 C2H2-type zinc fingers span residues 242-264 (YKCK…TRTH), 271-293 (LQCP…IRKH), 299-321 (FQCD…RKSH), and 327-351 (YRCA…KYGH). Disordered regions lie at residues 357–424 (LDED…TSQL), 518–570 (QLQQ…QPQQ), and 610–704 (GVMT…APPS). Residues 386 to 397 (IASGGSGSGSGS) are compositionally biased toward gly residues. A compositionally biased stretch (low complexity) spans 518 to 527 (QLQQQNQQQS). Over residues 528-537 (DNEEEEQDDE) the composition is skewed to acidic residues. Residues 661–704 (ANTSASSTASSSGNSSNASSNSNGNSSSNSSSSGTNSAAAAPPS) are compositionally biased toward low complexity. 2 C2H2-type zinc fingers span residues 714-736 (YECK…MGYH) and 742-766 (FKCN…RNAH).

This sequence belongs to the hunchback C2H2-type zinc-finger protein family.

The protein localises to the nucleus. In terms of biological role, gap class segmentation protein that controls development of head structures. The sequence is that of Protein hunchback (hb) from Drosophila orena (Fruit fly).